The following is a 226-amino-acid chain: PKHD-type hydroxylase Daci_1172 (226 aa).

The Fe2OG dioxygenase domain occupies Lys-78–Ser-178. The Fe cation site is built by His-96, Asp-98, and His-159. Arg-169 lines the 2-oxoglutarate pocket.

The cofactor is Fe(2+). It depends on L-ascorbate as a cofactor.

This Delftia acidovorans (strain DSM 14801 / SPH-1) protein is PKHD-type hydroxylase Daci_1172.